Reading from the N-terminus, the 214-residue chain is Large ribosomal subunit protein bL25 (214 aa).

2 disordered regions span residues 1–23 (MSNEFLLNAESRSDTGKGASRRL) and 182–214 (DHDQPVAAVHQPKVRASSDDDDAAEGEEAASEE). Over residues 200–214 (DDDDAAEGEEAASEE) the composition is skewed to acidic residues.

It belongs to the bacterial ribosomal protein bL25 family. CTC subfamily. As to quaternary structure, part of the 50S ribosomal subunit; part of the 5S rRNA/L5/L18/L25 subcomplex. Contacts the 5S rRNA. Binds to the 5S rRNA independently of L5 and L18.

This is one of the proteins that binds to the 5S RNA in the ribosome where it forms part of the central protuberance. The protein is Large ribosomal subunit protein bL25 of Alcanivorax borkumensis (strain ATCC 700651 / DSM 11573 / NCIMB 13689 / SK2).